The following is a 486-amino-acid chain: MTRIKLSYFTIGLVALLLALALWPNIPWRNGQEGQLDQIKARGELRVSTISSPLIYSTEKDTPSGFDYELAKRFADYLGVKLVIIPHHNIDDLFDALDNDDTDLLAAGLIYNRERLNRARTGPAYYSVSQQLVYRLGSPRPKSFSDLKGQVVVASGSAHMTTLKRLKQTKYPELNWSSSVDKSGKELLEQVAEGKLDYTLGDSATIALLQRIHPQLAVAFDVTDEEPVTWYFKQSDDDSLYAAMLDFYSEMVEDGSLARLEEKYLGHVGSFDYVDTKTFLSAIDNVLPSYQHLFEKHAGDIDWKLLAVIAYQESHWNPQATSPTGVRGLMMLTRVTADGLGVKDRVDPEESIRGGAIYLQRLMKKLPETIPEDERIWFALAAYNLGYGHMLDARRLTKNQNGNPDSWVDVKMRLPMLSQKRYYPSTTYGYARGHEAYNYVENIRRYQVSLVGYLQEKEKKAAQHAAIEAELGKSNPVVGPGWSIGD.

The N-terminal stretch at 1–21 (MTRIKLSYFTIGLVALLLALA) is a signal peptide. The segment at 22–268 (LWPNIPWRNG…RLEEKYLGHV (247 aa)) is non-LT domain. An LT domain region spans residues 269-486 (GSFDYVDTKT…VVGPGWSIGD (218 aa)). Glutamate 313 is a catalytic residue.

This sequence in the N-terminal section; belongs to the bacterial solute-binding protein 3 family. It in the C-terminal section; belongs to the transglycosylase Slt family.

The protein resides in the cell outer membrane. It catalyses the reaction Exolytic cleavage of the (1-&gt;4)-beta-glycosidic linkage between N-acetylmuramic acid (MurNAc) and N-acetylglucosamine (GlcNAc) residues in peptidoglycan, from either the reducing or the non-reducing ends of the peptidoglycan chains, with concomitant formation of a 1,6-anhydrobond in the MurNAc residue.. Functionally, murein-degrading enzyme that degrades murein glycan strands and insoluble, high-molecular weight murein sacculi, with the concomitant formation of a 1,6-anhydromuramoyl product. Lytic transglycosylases (LTs) play an integral role in the metabolism of the peptidoglycan (PG) sacculus. Their lytic action creates space within the PG sacculus to allow for its expansion as well as for the insertion of various structures such as secretion systems and flagella. The sequence is that of Membrane-bound lytic murein transglycosylase F from Yersinia pseudotuberculosis serotype I (strain IP32953).